Consider the following 267-residue polypeptide: Zerumbone synthase (267 aa).

An NAD(+)-binding site is contributed by 9–33 (LVTGGASGIGESIARLFIEHGAKIC). Residue S142 coordinates substrate. The Proton acceptor role is filled by Y155.

This sequence belongs to the short-chain dehydrogenases/reductases (SDR) family. As to expression, expressed in leaves, stems and rhizomes.

It catalyses the reaction 10-hydroxy-alpha-humulene + NAD(+) = zerumbone + NADH + H(+). In terms of biological role, catalyzes 8-hydroxy-alpha-humulene into zerumbone in presence of NAD. Also converts borneol to camphor in vitro. Zerumbone is a highly promising multi-anticancer agent. This is Zerumbone synthase (ZSD1) from Zingiber zerumbet (Shampoo ginger).